The primary structure comprises 1159 residues: Protocadherin-17 (1159 aa).

The N-terminal stretch at 1-17 is a signal peptide; that stretch reads MYLSICCCFLLWAPALT. 6 consecutive Cadherin domains span residues 18-132, 133-243, 244-351, 353-472, 473-583, and 589-695; these read LKNL…APSF, SSDQ…SPVF, EAPS…APSI, FVSV…PPRF, TKGL…APVI, and QNDT…VPRV. Over 18 to 707 the chain is Extracellular; it reads LKNLNYSVPE…EQHHWDMSLP (690 aa). N-linked (GlcNAc...) asparagine glycosylation is present at asparagine 22. The Cell attachment site motif lies at 186–188; that stretch reads RGD. N-linked (GlcNAc...) asparagine glycosylation is found at asparagine 266, asparagine 439, asparagine 453, asparagine 504, asparagine 566, and asparagine 590. The helical transmembrane segment at 708–728 threads the bilayer; sequence LIVTLSTISIILLAAMITIAV. Topologically, residues 729-1159 are cytoplasmic; it reads KCKRENKEIR…RGNDPVAVRK (431 aa). 2 disordered regions span residues 858-909 and 1108-1132; these read NFPA…KGSC and SRDS…GRES. Over residues 867–879 the composition is skewed to polar residues; that stretch reads GSRQQFVQSSSTF. 2 stretches are compositionally biased toward basic and acidic residues: residues 880–895 and 1120–1132; these read KDPE…HGDS and QLDH…GRES.

The protein resides in the cell membrane. In terms of biological role, potential calcium-dependent cell-adhesion protein. The polypeptide is Protocadherin-17 (PCDH17) (Homo sapiens (Human)).